The sequence spans 425 residues: Adenosylhomocysteinase (425 aa).

Positions 60, 132, and 157 each coordinate substrate. 158-160 serves as a coordination point for NAD(+); sequence TTT. Substrate is bound by residues K187 and D191. NAD(+) is bound by residues N192, 221 to 226, E244, N279, 300 to 302, and N347; these read GYGWCG and SGH.

The protein belongs to the adenosylhomocysteinase family. It depends on NAD(+) as a cofactor.

It is found in the cytoplasm. It carries out the reaction S-adenosyl-L-homocysteine + H2O = L-homocysteine + adenosine. It functions in the pathway amino-acid biosynthesis; L-homocysteine biosynthesis; L-homocysteine from S-adenosyl-L-homocysteine: step 1/1. May play a key role in the regulation of the intracellular concentration of adenosylhomocysteine. The protein is Adenosylhomocysteinase of Synechocystis sp. (strain ATCC 27184 / PCC 6803 / Kazusa).